Reading from the N-terminus, the 394-residue chain is MHNNILIAGAGIGGLSAALGLARKGMRSIVLEKAPELGEIGAGIQLAPNAYHALDALGIGEVARQTGVHVDKLLWMDGMTDKEIASVPLANRFREFFGNPYAVIHRADFHGLLVEACHKTGLVEVRTNAEVVDYENFPDRVEAILHDGSCINGAVLVGADGLWSNVRQKVIGDGDPRVSGHTTYRSVIPAEDMPEELRWNMSTAWAGEGCHMVHYPLKGGKVFNLVLTSNSGASEPEAGVPVTTDEVFEKFKTMKRRPTSLIHKGNNWKRWVLCDRDPLPNWVDGRVTLLGDAAHPMMQYMAQGASMAIEDAVCLAFELGREMDPVSALKKYNRARFARTARVQTYSRYASDFIYHAKGGAAAMRNELMGGMTPTDFFQWINWLYGKETVEKYK.

This sequence belongs to the 3-hydroxybenzoate 6-hydroxylase family. As to quaternary structure, homotrimer. It depends on FAD as a cofactor.

The catalysed reaction is 3-hydroxybenzoate + NADH + O2 + H(+) = 2,5-dihydroxybenzoate + NAD(+) + H2O. With respect to regulation, inhibited by manganese, copper, mercury, and iron ions. Functionally, catalyzes the NAD- or NADP-dependent conversion of 3-hydroxybenzoate to gentisate. The affinity of the enzyme toward NAD is twice as high as for NADP. The enzyme shows higher specific activities against the intermediates in the degradation of 2,5-xylenol and 3,5-xylenol, 3-hydroxy-4-methylbenzoate and 3-hydroxy-5-methylbenzoate, respectively, than for 3-hydroxybenzoate. It also shows activity against 3-substituted benzoates. This Aquipseudomonas alcaligenes (Pseudomonas alcaligenes) protein is 3-hydroxybenzoate 6-hydroxylase 1 (xlnD).